The primary structure comprises 298 residues: tRNA pseudouridine synthase-like 1 (298 aa).

D60 functions as the Nucleophile in the catalytic mechanism. Y124 contacts substrate.

The protein belongs to the tRNA pseudouridine synthase TruA family.

It catalyses the reaction a uridine in tRNA = a pseudouridine in tRNA. The protein is tRNA pseudouridine synthase-like 1 (pusl1) of Xenopus laevis (African clawed frog).